Here is a 187-residue protein sequence, read N- to C-terminus: Nuclear transcription factor Y subunit C-8 (187 aa).

A disordered region spans residues 163 to 187 (WPGAWTSVSGEEEEARGKKGGDDGN). Basic and acidic residues predominate over residues 177-187 (ARGKKGGDDGN).

This sequence belongs to the NFYC/HAP5 subunit family. Heterotrimeric transcription factor composed of three components, NF-YA, NF-YB and NF-YC. NF-YB and NF-YC must interact and dimerize for NF-YA association and DNA binding. Expressed in flowers and siliques.

It is found in the nucleus. Its function is as follows. Stimulates the transcription of various genes by recognizing and binding to a CCAAT motif in promoters. This is Nuclear transcription factor Y subunit C-8 (NFYC8) from Arabidopsis thaliana (Mouse-ear cress).